The sequence spans 435 residues: Methylenetetrahydrofolate--tRNA-(uracil-5-)-methyltransferase TrmFO (435 aa).

10–15 (GAGLAG) serves as a coordination point for FAD.

Belongs to the MnmG family. TrmFO subfamily. The cofactor is FAD.

The protein localises to the cytoplasm. It catalyses the reaction uridine(54) in tRNA + (6R)-5,10-methylene-5,6,7,8-tetrahydrofolate + NADH + H(+) = 5-methyluridine(54) in tRNA + (6S)-5,6,7,8-tetrahydrofolate + NAD(+). It carries out the reaction uridine(54) in tRNA + (6R)-5,10-methylene-5,6,7,8-tetrahydrofolate + NADPH + H(+) = 5-methyluridine(54) in tRNA + (6S)-5,6,7,8-tetrahydrofolate + NADP(+). Its function is as follows. Catalyzes the folate-dependent formation of 5-methyl-uridine at position 54 (M-5-U54) in all tRNAs. This is Methylenetetrahydrofolate--tRNA-(uracil-5-)-methyltransferase TrmFO from Geotalea uraniireducens (strain Rf4) (Geobacter uraniireducens).